A 94-amino-acid chain; its full sequence is Large ribosomal subunit protein bL25 (94 aa).

The protein belongs to the bacterial ribosomal protein bL25 family. In terms of assembly, part of the 50S ribosomal subunit; part of the 5S rRNA/L5/L18/L25 subcomplex. Contacts the 5S rRNA. Binds to the 5S rRNA independently of L5 and L18.

Functionally, this is one of the proteins that binds to the 5S RNA in the ribosome where it forms part of the central protuberance. This is Large ribosomal subunit protein bL25 from Citrobacter koseri (strain ATCC BAA-895 / CDC 4225-83 / SGSC4696).